A 312-amino-acid polypeptide reads, in one-letter code: Olfactory receptor 6C76 (312 aa).

Residues 1–23 (MKNRTSVTDFILLGLTDNPQLQV) are Extracellular-facing. N-linked (GlcNAc...) asparagine glycosylation is present at N3. The chain crosses the membrane as a helical span at residues 24 to 44 (VIFSFLFLTYVLSVTGNLTII). The Cytoplasmic portion of the chain corresponds to 45 to 57 (SLTLLDSHLKTPM). Residues 58–80 (YFFLRNFSLEISFTSVCNPRFLI) traverse the membrane as a helical segment. At 81–94 (SILTGDKSISYNAC) the chain is on the extracellular side. C94 and C176 are oxidised to a cystine. Residues 95-115 (AAQLFFFIFLGSTEFFLLASM) form a helical membrane-spanning segment. Residues 116 to 142 (SYDCYVAICKPLHYTTIMSDRICYQLI) are Cytoplasmic-facing. The helical transmembrane segment at 143–163 (ISSWLAGFLVIFPPLAMGLQL) threads the bilayer. Topologically, residues 164 to 195 (DFCDSNVIDHFTCDSAPLLQISCTDTSTLELM) are extracellular. The chain crosses the membrane as a helical span at residues 196 to 216 (SFILALFTLISTLILVILSYT). Over 217–238 (YIIRTILRIPSAQQRKKAFSTC) the chain is Cytoplasmic. Residues 239–259 (SSHVIVVSISYGSCIFMYVKT) traverse the membrane as a helical segment. Over 260–267 (SAKEGVAL) the chain is Extracellular. Residues 268 to 288 (TKGVAILNTSVAPMLNPFIYT) form a helical membrane-spanning segment. The Cytoplasmic portion of the chain corresponds to 289–312 (LRNQQVKQAFKDVLRKISHKKKKH).

This sequence belongs to the G-protein coupled receptor 1 family.

It localises to the cell membrane. Functionally, odorant receptor. This Homo sapiens (Human) protein is Olfactory receptor 6C76 (OR6C76).